The sequence spans 504 residues: Lysine--tRNA ligase (504 aa).

The Mg(2+) site is built by E411 and E418.

The protein belongs to the class-II aminoacyl-tRNA synthetase family. In terms of assembly, homodimer. Mg(2+) serves as cofactor.

It is found in the cytoplasm. The catalysed reaction is tRNA(Lys) + L-lysine + ATP = L-lysyl-tRNA(Lys) + AMP + diphosphate. This chain is Lysine--tRNA ligase, found in Clostridium botulinum (strain Loch Maree / Type A3).